The sequence spans 247 residues: STING ER exit protein (247 aa).

Position 127 is a phosphoserine (serine 127). Residues 195-216 (EAREIADSYANNARIIEKQLQR) adopt a coiled-coil conformation. Residues 215 to 247 (QRKGGKLSDVGIKTKTEDAPPPQKKQRGTLLER) are disordered.

This sequence belongs to the STEEP1 family.

Functionally, molecular adapter that stimulates membrane curvature formation and subsequent endoplasmic reticulum exit site (ERES) establishment by recruiting PI3K complex I, leading to COPII vesicle-mediated transport. The polypeptide is STING ER exit protein (Drosophila melanogaster (Fruit fly)).